Here is a 253-residue protein sequence, read N- to C-terminus: Uracil-DNA glycosylase (253 aa).

D79 functions as the Proton acceptor in the catalytic mechanism.

It belongs to the uracil-DNA glycosylase (UDG) superfamily. UNG family.

It is found in the cytoplasm. The catalysed reaction is Hydrolyzes single-stranded DNA or mismatched double-stranded DNA and polynucleotides, releasing free uracil.. Excises uracil residues from the DNA which can arise as a result of misincorporation of dUMP residues by DNA polymerase or due to deamination of cytosine. This is Uracil-DNA glycosylase from Xylella fastidiosa (strain M12).